Here is a 329-residue protein sequence, read N- to C-terminus: Phenylalanine--tRNA ligase alpha subunit (329 aa).

Position 254 (glutamate 254) interacts with Mg(2+).

This sequence belongs to the class-II aminoacyl-tRNA synthetase family. Phe-tRNA synthetase alpha subunit type 1 subfamily. As to quaternary structure, tetramer of two alpha and two beta subunits. Mg(2+) is required as a cofactor.

Its subcellular location is the cytoplasm. It carries out the reaction tRNA(Phe) + L-phenylalanine + ATP = L-phenylalanyl-tRNA(Phe) + AMP + diphosphate + H(+). The polypeptide is Phenylalanine--tRNA ligase alpha subunit (Mannheimia succiniciproducens (strain KCTC 0769BP / MBEL55E)).